The following is a 518-amino-acid chain: MARARRVKRDSVTHIYQTCKQAGTCPPDVINKVEQTTVADNILKYGSAGVFFGGLGIGTGRGTGGVTGYTPLSEGPGIRVGNTPTVVRPSLVPEAVGPMDILPIDTIDPVEPSVSSVVPLTESSGADLLPGEVETIAEIHPVPEGPTIDSPVVTTSKGSSAILEVAPEPTPPTRVRVSRTQYHNPSFQIITDSTPTQGESSLADHILVTSGSGGQTIGSDITDVIELQEFPSRYSFEIDEPTPPRQSSTPIERPQVVGRRRGISLTNRRLIQQVAVEDPLFLSKPSKLVRFSFDNPVFEEEVTNIFEQDVDMVEEPPDRDFLDVRQLGRPQYSTTPAGYVRVSRLGTRGTIRTRSGAQIGSQVHFYRDLSSINTEDPIELQLLGQHSGDSTIVQGPVESTFVNVDISENPLSESIQAFSDDLLLDETVEDFSGSQLVIGNRRSTTSYTVPRFETTRSGSYYVQDTKGYYVAYPESRNNEEIIYPTPDLPVVIIHTHDNSGDFFLHPSLRRRKRKRKYL.

The Nuclear localization signal signature appears at 1–10 (MARARRVKRD). Cysteine 19 and cysteine 25 are joined by a disulfide. Residues 510 to 517 (RRKRKRKY) carry the Nuclear localization signal motif.

It belongs to the papillomaviridae L2 protein family. As to quaternary structure, interacts with major capsid protein L1. Interacts with E2; this interaction inhibits E2 transcriptional activity but not the DNA replication function E2. Interacts with host GADD45GIP1. Interacts with host HSPA8; this interaction is required for L2 nuclear translocation. Interacts with host importins KPNB2 and KPNB3. Forms a complex with importin alpha2-beta1 heterodimers via interaction with the importin alpha2 adapter. Interacts with host DYNLT1; this interaction is essential for virus intracellular transport during entry. Interacts (via C-terminus) with host retromer subunits VPS35 and VPS29. Highly phosphorylated.

It localises to the virion. The protein localises to the host nucleus. The protein resides in the host early endosome. It is found in the host Golgi apparatus. Its function is as follows. Minor protein of the capsid that localizes along the inner surface of the virion, within the central cavities beneath the L1 pentamers. Plays a role in capsid stabilization through interaction with the major capsid protein L1. Once the virion enters the host cell, L2 escorts the genomic DNA into the nucleus by promoting escape from the endosomal compartments and traffic through the host Golgi network. Mechanistically, the C-terminus of L2 possesses a cell-penetrating peptide that protudes from the host endosome, interacts with host cytoplasmic retromer cargo and thereby mediates the capsid delivery to the host trans-Golgi network. Plays a role through its interaction with host dynein in the intracellular microtubule-dependent transport of viral capsid toward the nucleus. Mediates the viral genome import into the nucleus through binding to host importins. Once within the nucleus, L2 localizes viral genomes to host PML bodies in order to activate early gene expression for establishment of infection. Later on, promotes late gene expression by interacting with the viral E2 protein and by inhibiting its transcriptional activation functions. During virion assembly, encapsidates the genome by direct interaction with the viral DNA. In Homo sapiens (Human), this protein is Minor capsid protein L2.